A 160-amino-acid polypeptide reads, in one-letter code: 2-C-methyl-D-erythritol 2,4-cyclodiphosphate synthase (160 aa).

Positions 9 and 11 each coordinate a divalent metal cation. 4-CDP-2-C-methyl-D-erythritol 2-phosphate is bound by residues 9–11 (DVH) and 35–36 (HS). Histidine 43 serves as a coordination point for a divalent metal cation. 4-CDP-2-C-methyl-D-erythritol 2-phosphate-binding positions include 57-59 (DIG), 62-66 (FPDTD), 101-107 (AQKPKMA), 133-136 (TTTE), phenylalanine 140, and arginine 143.

Belongs to the IspF family. Homotrimer. It depends on a divalent metal cation as a cofactor.

The enzyme catalyses 4-CDP-2-C-methyl-D-erythritol 2-phosphate = 2-C-methyl-D-erythritol 2,4-cyclic diphosphate + CMP. It functions in the pathway isoprenoid biosynthesis; isopentenyl diphosphate biosynthesis via DXP pathway; isopentenyl diphosphate from 1-deoxy-D-xylulose 5-phosphate: step 4/6. In terms of biological role, involved in the biosynthesis of isopentenyl diphosphate (IPP) and dimethylallyl diphosphate (DMAPP), two major building blocks of isoprenoid compounds. Catalyzes the conversion of 4-diphosphocytidyl-2-C-methyl-D-erythritol 2-phosphate (CDP-ME2P) to 2-C-methyl-D-erythritol 2,4-cyclodiphosphate (ME-CPP) with a corresponding release of cytidine 5-monophosphate (CMP). The protein is 2-C-methyl-D-erythritol 2,4-cyclodiphosphate synthase of Geobacillus thermodenitrificans (strain NG80-2).